We begin with the raw amino-acid sequence, 805 residues long: Sucrose synthase 1 (805 aa).

Residues 274 to 751 (MVFNVVILSP…GLQRIYEKYT (478 aa)) are GT-B glycosyltransferase.

The protein belongs to the glycosyltransferase 1 family. Plant sucrose synthase subfamily.

The enzyme catalyses an NDP-alpha-D-glucose + D-fructose = a ribonucleoside 5'-diphosphate + sucrose + H(+). In terms of biological role, sucrose-cleaving enzyme that provides UDP-glucose and fructose for various metabolic pathways. This Tulipa gesneriana (Garden tulip) protein is Sucrose synthase 1.